A 202-amino-acid chain; its full sequence is 3-isopropylmalate dehydratase small subunit (202 aa).

It belongs to the LeuD family. LeuD type 1 subfamily. In terms of assembly, heterodimer of LeuC and LeuD.

It catalyses the reaction (2R,3S)-3-isopropylmalate = (2S)-2-isopropylmalate. Its pathway is amino-acid biosynthesis; L-leucine biosynthesis; L-leucine from 3-methyl-2-oxobutanoate: step 2/4. Its function is as follows. Catalyzes the isomerization between 2-isopropylmalate and 3-isopropylmalate, via the formation of 2-isopropylmaleate. The protein is 3-isopropylmalate dehydratase small subunit of Nocardia farcinica (strain IFM 10152).